Reading from the N-terminus, the 285-residue chain is Protoheme IX farnesyltransferase (285 aa).

7 consecutive transmembrane segments (helical) span residues 16–36 (AKPKVVSLLDVVAIASYILAF), 40–60 (WYNLIPVLIGGSIAAGGSMII), 106–126 (LLANPLTAFFILLGSLVYVFV), 136–156 (WLNIVIGGFAGSAAAWAGYAA), 165–185 (SLLLGLLVFAWTPGHFWALAL), 217–237 (ILMIPFALGLMLYLNLIYVII), and 265–285 (YKFSAPYLAIVMIAAVISFIL).

This sequence belongs to the UbiA prenyltransferase family. Protoheme IX farnesyltransferase subfamily.

It localises to the cell membrane. The enzyme catalyses heme b + (2E,6E)-farnesyl diphosphate + H2O = Fe(II)-heme o + diphosphate. It participates in porphyrin-containing compound metabolism; heme O biosynthesis; heme O from protoheme: step 1/1. In terms of biological role, converts heme B (protoheme IX) to heme O by substitution of the vinyl group on carbon 2 of heme B porphyrin ring with a hydroxyethyl farnesyl side group. In Sulfolobus acidocaldarius (strain ATCC 33909 / DSM 639 / JCM 8929 / NBRC 15157 / NCIMB 11770), this protein is Protoheme IX farnesyltransferase.